The chain runs to 147 residues: MAKKVTGYVKLQLPAGKANPSPPVGPALGQHGVNIMAFCKDFNSRTAAQGDLIIPVVITVYSDRSFTFIMKTPPASVLLKKAAGLETKKKPGAGSKEPNKVKVGKVTQKQLKELAQLKMQDMNTTNLESAMRSMAGTARSMGIDVVD.

The protein belongs to the universal ribosomal protein uL11 family. In terms of assembly, part of the ribosomal stalk of the 50S ribosomal subunit. Interacts with L10 and the large rRNA to form the base of the stalk. L10 forms an elongated spine to which L12 dimers bind in a sequential fashion forming a multimeric L10(L12)X complex. One or more lysine residues are methylated.

Forms part of the ribosomal stalk which helps the ribosome interact with GTP-bound translation factors. This is Large ribosomal subunit protein uL11 from Sorangium cellulosum (strain So ce56) (Polyangium cellulosum (strain So ce56)).